A 247-amino-acid chain; its full sequence is 5-oxoprolinase subunit A (247 aa).

It belongs to the LamB/PxpA family. As to quaternary structure, forms a complex composed of PxpA, PxpB and PxpC.

The enzyme catalyses 5-oxo-L-proline + ATP + 2 H2O = L-glutamate + ADP + phosphate + H(+). Functionally, catalyzes the cleavage of 5-oxoproline to form L-glutamate coupled to the hydrolysis of ATP to ADP and inorganic phosphate. The chain is 5-oxoprolinase subunit A from Vibrio vulnificus (strain CMCP6).